The following is a 458-amino-acid chain: tRNA modification GTPase MnmE (458 aa).

(6S)-5-formyl-5,6,7,8-tetrahydrofolate-binding residues include arginine 22, glutamate 85, and arginine 124. One can recognise a TrmE-type G domain in the interval 220 to 379 (GIKTVIVGRP…LEEHISELVF (160 aa)). Asparagine 230 provides a ligand contact to K(+). Residues 230–235 (NVGKSS), 249–255 (TEIPGTT), and 274–277 (DTAG) contribute to the GTP site. A Mg(2+)-binding site is contributed by serine 234. K(+) contacts are provided by threonine 249, isoleucine 251, and threonine 254. Mg(2+) is bound at residue threonine 255. Lysine 458 lines the (6S)-5-formyl-5,6,7,8-tetrahydrofolate pocket.

This sequence belongs to the TRAFAC class TrmE-Era-EngA-EngB-Septin-like GTPase superfamily. TrmE GTPase family. As to quaternary structure, homodimer. Heterotetramer of two MnmE and two MnmG subunits. K(+) serves as cofactor.

The protein resides in the cytoplasm. Functionally, exhibits a very high intrinsic GTPase hydrolysis rate. Involved in the addition of a carboxymethylaminomethyl (cmnm) group at the wobble position (U34) of certain tRNAs, forming tRNA-cmnm(5)s(2)U34. This is tRNA modification GTPase MnmE from Natranaerobius thermophilus (strain ATCC BAA-1301 / DSM 18059 / JW/NM-WN-LF).